The sequence spans 378 residues: Sperm microtubule associated protein 2 (378 aa).

Disordered stretches follow at residues 1–35 (MGEL…SDGS) and 47–79 (WLQS…LPEV). Polar residues predominate over residues 47–56 (WLQSSQATTE). The span at 61-77 (DPEEEIPPEEMVGEELP) shows a compositional bias: acidic residues. 7 THEG repeats span residues 113–132 (AKCR…PKFN), 179–198 (TITV…PKRF), 217–236 (STLE…PKIR), 253–272 (AAQM…PRAP), 285–304 (PKPY…PKAL), 321–340 (VTKN…PKIR), and 355–374 (ASLV…PKHI). Residue Ser290 is modified to Phosphoserine.

In terms of assembly, interacts with CCT5.

Its subcellular location is the nucleus. In terms of biological role, may be involved (but not essential) in spermatogenesis. The protein is Sperm microtubule associated protein 2 of Rattus norvegicus (Rat).